Here is a 94-residue protein sequence, read N- to C-terminus: uncharacterized protein (94 aa).

The disordered stretch occupies residues 1 to 22 (MATLQQAQQQNNQLTQQNNQLT). Residues 1–77 (MATLQQAQQQ…NRLHSENHRL (77 aa)) are a coiled coil.

This is an uncharacterized protein from Acheta domesticus (House cricket).